A 308-amino-acid chain; its full sequence is 4-hydroxy-3-methylbut-2-enyl diphosphate reductase 2 (308 aa).

Position 12 (Cys-12) interacts with [4Fe-4S] cluster. Positions 41 and 74 each coordinate (2E)-4-hydroxy-3-methylbut-2-enyl diphosphate. Positions 41 and 74 each coordinate dimethylallyl diphosphate. His-41 and His-74 together coordinate isopentenyl diphosphate. Residue Cys-96 participates in [4Fe-4S] cluster binding. His-124 contacts (2E)-4-hydroxy-3-methylbut-2-enyl diphosphate. His-124 lines the dimethylallyl diphosphate pocket. His-124 contacts isopentenyl diphosphate. The active-site Proton donor is the Glu-126. Position 164 (Thr-164) interacts with (2E)-4-hydroxy-3-methylbut-2-enyl diphosphate. Cys-194 lines the [4Fe-4S] cluster pocket. Residues Ser-222, Ser-223, Asn-224, and Ser-266 each coordinate (2E)-4-hydroxy-3-methylbut-2-enyl diphosphate. Residues Ser-222, Ser-223, Asn-224, and Ser-266 each contribute to the dimethylallyl diphosphate site. Isopentenyl diphosphate-binding residues include Ser-222, Ser-223, Asn-224, and Ser-266.

The protein belongs to the IspH family. [4Fe-4S] cluster is required as a cofactor.

The enzyme catalyses isopentenyl diphosphate + 2 oxidized [2Fe-2S]-[ferredoxin] + H2O = (2E)-4-hydroxy-3-methylbut-2-enyl diphosphate + 2 reduced [2Fe-2S]-[ferredoxin] + 2 H(+). The catalysed reaction is dimethylallyl diphosphate + 2 oxidized [2Fe-2S]-[ferredoxin] + H2O = (2E)-4-hydroxy-3-methylbut-2-enyl diphosphate + 2 reduced [2Fe-2S]-[ferredoxin] + 2 H(+). Its pathway is isoprenoid biosynthesis; dimethylallyl diphosphate biosynthesis; dimethylallyl diphosphate from (2E)-4-hydroxy-3-methylbutenyl diphosphate: step 1/1. It functions in the pathway isoprenoid biosynthesis; isopentenyl diphosphate biosynthesis via DXP pathway; isopentenyl diphosphate from 1-deoxy-D-xylulose 5-phosphate: step 6/6. Catalyzes the conversion of 1-hydroxy-2-methyl-2-(E)-butenyl 4-diphosphate (HMBPP) into a mixture of isopentenyl diphosphate (IPP) and dimethylallyl diphosphate (DMAPP). Acts in the terminal step of the DOXP/MEP pathway for isoprenoid precursor biosynthesis. The sequence is that of 4-hydroxy-3-methylbut-2-enyl diphosphate reductase 2 from Bradyrhizobium diazoefficiens (strain JCM 10833 / BCRC 13528 / IAM 13628 / NBRC 14792 / USDA 110).